A 598-amino-acid chain; its full sequence is Elongation factor 4 (598 aa).

The 182-residue stretch at 4 to 185 (KNIRNFSIIA…TIIAKIPPPK (182 aa)) folds into the tr-type G domain. GTP contacts are provided by residues 16-21 (DHGKST) and 132-135 (NKID).

Belongs to the TRAFAC class translation factor GTPase superfamily. Classic translation factor GTPase family. LepA subfamily.

It is found in the cell membrane. It carries out the reaction GTP + H2O = GDP + phosphate + H(+). Its function is as follows. Required for accurate and efficient protein synthesis under certain stress conditions. May act as a fidelity factor of the translation reaction, by catalyzing a one-codon backward translocation of tRNAs on improperly translocated ribosomes. Back-translocation proceeds from a post-translocation (POST) complex to a pre-translocation (PRE) complex, thus giving elongation factor G a second chance to translocate the tRNAs correctly. Binds to ribosomes in a GTP-dependent manner. The chain is Elongation factor 4 from Mycoplasma genitalium (strain ATCC 33530 / DSM 19775 / NCTC 10195 / G37) (Mycoplasmoides genitalium).